Reading from the N-terminus, the 1058-residue chain is Carbamoyl phosphate synthase large chain (1058 aa).

Residues 1 to 401 form a carboxyphosphate synthetic domain region; it reads MPKRKDIKTI…SLLKAIRSLE (401 aa). Positions 129, 169, 175, 176, 208, 210, 215, 241, 242, 243, 284, and 298 each coordinate ATP. One can recognise an ATP-grasp 1 domain in the interval 133-327; that stretch reads RDLMNELNEP…IAKIAAKIAV (195 aa). Residues Gln-284, Glu-298, and Asn-300 each coordinate Mg(2+). Gln-284, Glu-298, and Asn-300 together coordinate Mn(2+). The tract at residues 402-546 is oligomerization domain; it reads YGVHHLGLPN…YSTYEFENES (145 aa). A carbamoyl phosphate synthetic domain region spans residues 547 to 929; the sequence is TRSDKEKIVV…ALYKGLTAAG (383 aa). An ATP-grasp 2 domain is found at 671 to 861; the sequence is EKLLIGLKIP…VANIAMQCIL (191 aa). ATP-binding residues include Arg-707, Arg-746, Leu-748, Glu-752, Gly-777, Val-778, His-779, Ser-780, Gln-820, and Glu-832. Positions 820, 832, and 834 each coordinate Mg(2+). Residues Gln-820, Glu-832, and Asn-834 each coordinate Mn(2+). Residues 930–1058 form the MGS-like domain; that stretch reads IKIKDYGRVL…ESMSFRVQTL (129 aa). Positions 930 to 1058 are allosteric domain; it reads IKIKDYGRVL…ESMSFRVQTL (129 aa).

The protein belongs to the CarB family. As to quaternary structure, composed of two chains; the small (or glutamine) chain promotes the hydrolysis of glutamine to ammonia, which is used by the large (or ammonia) chain to synthesize carbamoyl phosphate. Tetramer of heterodimers (alpha,beta)4. Requires Mg(2+) as cofactor. Mn(2+) serves as cofactor.

The enzyme catalyses hydrogencarbonate + L-glutamine + 2 ATP + H2O = carbamoyl phosphate + L-glutamate + 2 ADP + phosphate + 2 H(+). It carries out the reaction hydrogencarbonate + NH4(+) + 2 ATP = carbamoyl phosphate + 2 ADP + phosphate + 2 H(+). Its pathway is amino-acid biosynthesis; L-arginine biosynthesis; carbamoyl phosphate from bicarbonate: step 1/1. It functions in the pathway pyrimidine metabolism; UMP biosynthesis via de novo pathway; (S)-dihydroorotate from bicarbonate: step 1/3. In terms of biological role, large subunit of the glutamine-dependent carbamoyl phosphate synthetase (CPSase). CPSase catalyzes the formation of carbamoyl phosphate from the ammonia moiety of glutamine, carbonate, and phosphate donated by ATP, constituting the first step of 2 biosynthetic pathways, one leading to arginine and/or urea and the other to pyrimidine nucleotides. The large subunit (synthetase) binds the substrates ammonia (free or transferred from glutamine from the small subunit), hydrogencarbonate and ATP and carries out an ATP-coupled ligase reaction, activating hydrogencarbonate by forming carboxy phosphate which reacts with ammonia to form carbamoyl phosphate. This chain is Carbamoyl phosphate synthase large chain, found in Fusobacterium nucleatum subsp. nucleatum (strain ATCC 25586 / DSM 15643 / BCRC 10681 / CIP 101130 / JCM 8532 / KCTC 2640 / LMG 13131 / VPI 4355).